We begin with the raw amino-acid sequence, 106 residues long: Toxin-like structure LSTX-D6 (106 aa).

A signal peptide spans 1–20 (MMKVLVVAALLVTLISYSSS). A propeptide spanning residues 21–41 (EGIDDLEADELLSLMANEQTR) is cleaved from the precursor. 4 cysteine pairs are disulfide-bonded: cysteine 45-cysteine 60, cysteine 52-cysteine 69, cysteine 59-cysteine 85, and cysteine 71-cysteine 83.

The protein belongs to the neurotoxin 19 (CSTX) family. 02 (D7) subfamily. Expressed by the venom gland.

Its subcellular location is the secreted. The protein is Toxin-like structure LSTX-D6 of Lycosa singoriensis (Wolf spider).